The following is a 347-amino-acid chain: uncharacterized protein (347 aa).

2 coiled-coil regions span residues 148–201 (DQQS…EKDG) and 261–298 (LENL…DTFS). A disordered region spans residues 151–203 (SISNLRKEEKEKQKENENENENENENENENEKENQELDKKVNQTNDNEKDGDE). Positions 155–167 (LRKEEKEKQKENE) are enriched in basic and acidic residues. The span at 168–178 (NENENENENEN) shows a compositional bias: acidic residues. Over residues 179–191 (ENEKENQELDKKV) the composition is skewed to basic and acidic residues.

This is an uncharacterized protein from Dictyostelium discoideum (Social amoeba).